Consider the following 76-residue polypeptide: Sec-independent protein translocase protein TatA (76 aa).

Residues 1–21 (MLGGLTGWHLLIILAVILLLF) traverse the membrane as a helical segment. The segment covering 44–57 (VNEMKKDGDKDKGE) has biased composition (basic and acidic residues). The segment at 44–76 (VNEMKKDGDKDKGEGGSTAPATDTGASSEQNSK) is disordered. Polar residues predominate over residues 62 to 76 (APATDTGASSEQNSK).

The protein belongs to the TatA/E family. As to quaternary structure, the Tat system comprises two distinct complexes: a TatABC complex, containing multiple copies of TatA, TatB and TatC subunits, and a separate TatA complex, containing only TatA subunits. Substrates initially bind to the TatABC complex, which probably triggers association of the separate TatA complex to form the active translocon.

The protein localises to the cell membrane. In terms of biological role, part of the twin-arginine translocation (Tat) system that transports large folded proteins containing a characteristic twin-arginine motif in their signal peptide across membranes. TatA could form the protein-conducting channel of the Tat system. This chain is Sec-independent protein translocase protein TatA, found in Leifsonia xyli subsp. xyli (strain CTCB07).